A 278-amino-acid polypeptide reads, in one-letter code: Diaminopimelate epimerase (278 aa).

Substrate contacts are provided by Asn11 and Asn63. Cys72 (proton donor) is an active-site residue. Residues 73–74 (GN), Asn160, Asn193, and 211–212 (ER) each bind substrate. Cys220 functions as the Proton acceptor in the catalytic mechanism. A substrate-binding site is contributed by 221 to 222 (GT).

This sequence belongs to the diaminopimelate epimerase family. As to quaternary structure, homodimer.

It is found in the cytoplasm. The catalysed reaction is (2S,6S)-2,6-diaminopimelate = meso-2,6-diaminopimelate. Its pathway is amino-acid biosynthesis; L-lysine biosynthesis via DAP pathway; DL-2,6-diaminopimelate from LL-2,6-diaminopimelate: step 1/1. Catalyzes the stereoinversion of LL-2,6-diaminopimelate (L,L-DAP) to meso-diaminopimelate (meso-DAP), a precursor of L-lysine and an essential component of the bacterial peptidoglycan. The sequence is that of Diaminopimelate epimerase from Desulforudis audaxviator (strain MP104C).